A 506-amino-acid polypeptide reads, in one-letter code: Cytochrome P450 6a8 (506 aa).

Cys451 lines the heme pocket.

The protein belongs to the cytochrome P450 family. Heme serves as cofactor.

It is found in the endoplasmic reticulum membrane. The protein resides in the microsome membrane. In terms of biological role, involved in the metabolism of insect hormones and in the breakdown of synthetic insecticides. This chain is Cytochrome P450 6a8 (Cyp6a8), found in Drosophila melanogaster (Fruit fly).